Reading from the N-terminus, the 221-residue chain is Large ribosomal subunit protein uL3 (221 aa).

Belongs to the universal ribosomal protein uL3 family. As to quaternary structure, part of the 50S ribosomal subunit. Forms a cluster with proteins L14 and L19.

In terms of biological role, one of the primary rRNA binding proteins, it binds directly near the 3'-end of the 23S rRNA, where it nucleates assembly of the 50S subunit. This chain is Large ribosomal subunit protein uL3, found in Chlamydia abortus (strain DSM 27085 / S26/3) (Chlamydophila abortus).